A 113-amino-acid polypeptide reads, in one-letter code: Dolichyl-diphosphooligosaccharide--protein glycosyltransferase subunit DAD1 (113 aa).

The residue at position 2 (Ser2) is an N-acetylserine. Residues 2–30 (SASVLSVISRFLEEYLSATPQRLKLLDAY) lie on the Cytoplasmic side of the membrane. Residues 31 to 51 (LLYILLTGALQFGYCLLVGTF) form a helical membrane-spanning segment. A topological domain (lumenal) is located at residue Pro52. The chain crosses the membrane as a helical span at residues 53–73 (FNSFLSGFISCVGSFILAVCL). Residues 74-92 (RIQINPQNKADFQGISPER) are Cytoplasmic-facing. The helical transmembrane segment at 93 to 113 (AFADFLFASTILHLVVMNFVG) threads the bilayer.

The protein belongs to the DAD/OST2 family. In terms of assembly, component of the oligosaccharyltransferase (OST) complex. OST exists in two different complex forms which contain common core subunits RPN1, RPN2, OST48, OST4, DAD1 and TMEM258, either STT3A or STT3B as catalytic subunits, and form-specific accessory subunits. STT3A complex assembly occurs through the formation of 3 subcomplexes. Subcomplex 1 contains RPN1 and TMEM258, subcomplex 2 contains the STT3A-specific subunits STT3A, DC2/OSTC, and KCP2 as well as the core subunit OST4, and subcomplex 3 contains RPN2, DAD1, and OST48. The STT3A complex can form stable complexes with the Sec61 complex or with both the Sec61 and TRAP complexes.

Its subcellular location is the endoplasmic reticulum membrane. It functions in the pathway protein modification; protein glycosylation. Subunit of the oligosaccharyl transferase (OST) complex that catalyzes the initial transfer of a defined glycan (Glc(3)Man(9)GlcNAc(2) in eukaryotes) from the lipid carrier dolichol-pyrophosphate to an asparagine residue within an Asn-X-Ser/Thr consensus motif in nascent polypeptide chains, the first step in protein N-glycosylation. N-glycosylation occurs cotranslationally and the complex associates with the Sec61 complex at the channel-forming translocon complex that mediates protein translocation across the endoplasmic reticulum (ER). All subunits are required for a maximal enzyme activity. The protein is Dolichyl-diphosphooligosaccharide--protein glycosyltransferase subunit DAD1 of Bos taurus (Bovine).